The sequence spans 288 residues: Probable ketoamine kinase SAOUHSC_02908 (288 aa).

86-88 contributes to the ATP binding site; the sequence is TYL. Asp191 acts as the Proton acceptor in catalysis.

It belongs to the fructosamine kinase family.

The enzyme catalyses N(6)-(D-ribulosyl)-L-lysine + ATP = N(6)-(3-O-phospho-D-ribulosyl)-L-lysine + ADP + H(+). It catalyses the reaction N(6)-(D-erythrulosyl)-L-lysine + ATP = N(6)-(3-O-phospho-D-erythrulosyl)-L-lysine + ADP + H(+). The catalysed reaction is N(6)-D-ribulosyl-L-lysyl-[protein] + ATP = N(6)-(3-O-phospho-D-ribulosyl)-L-lysyl-[protein] + ADP + H(+). It carries out the reaction N(6)-(D-erythrulosyl)-L-lysyl-[protein] + ATP = N(6)-(3-O-phospho-D-erythrulosyl)-L-lysyl-[protein] + ADP + H(+). Ketoamine kinase that phosphorylates ketoamines, such as erythruloselysine and ribuloselysine, on the third carbon of the sugar moiety to generate ketoamine 3-phosphate. Has higher activity on free lysine (erythruloselysine and ribuloselysine), than on ribuloselysine and erythruloselysine residues on glycated proteins. In Staphylococcus aureus (strain NCTC 8325 / PS 47), this protein is Probable ketoamine kinase SAOUHSC_02908.